A 615-amino-acid polypeptide reads, in one-letter code: Probable ATP-citrate synthase subunit 1 (615 aa).

ATP-binding positions include 221–241 and 272–298; these read LIRF…EVGG and FKTE…KNQA. Glutamate 238 is a Mg(2+) binding site. Catalysis depends on histidine 280, which acts as the Tele-phosphohistidine intermediate. Residue 299 to 309 coordinates CoA; the sequence is MREAGIYVPET. Position 359 is a phosphoserine (serine 359).

Belongs to the succinate/malate CoA ligase alpha subunit family. Composed of two subunits.

It localises to the cytoplasm. The enzyme catalyses oxaloacetate + acetyl-CoA + ADP + phosphate = citrate + ATP + CoA. In terms of biological role, catalyzes the formation of cytosolic acetyl-CoA, which is mainly used for the biosynthesis of fatty acids and sterols. This chain is Probable ATP-citrate synthase subunit 1, found in Schizosaccharomyces pombe (strain 972 / ATCC 24843) (Fission yeast).